Reading from the N-terminus, the 629-residue chain is uncharacterized protein (629 aa).

Position 1 is an N-acetylmethionine (Met-1). A disordered region spans residues 308 to 395 (VDPEPEPDPP…PGRRSRARNA (88 aa)). Over residues 322 to 334 (SANEPASQPNSRS) the composition is skewed to polar residues. The 137-residue stretch at 451-587 (LVIFVVDASG…VAEGAAAVVV (137 aa)) folds into the VWFA domain.

This sequence belongs to the Mg-chelatase subunits D/I family.

This is an uncharacterized protein from Mycobacterium tuberculosis (strain ATCC 25618 / H37Rv).